We begin with the raw amino-acid sequence, 554 residues long: MRTAMSCGGGLVQRLDFSSSEEEDGLSNGINEAPQKGSPVSSWRTNNCPFPITPQRNERGLSPTQELSPSSDYSPDPSDKGAGGECPGTPLHYSTWKKLKLCDTPYTPKSLLYKTLPSPGSRVHCRGQRLLRFVAGTGAETEDPTLVNVNPFTPQSYRQTHFQPNGKRKERPEDDCSSDSQMKFTDKEHPSVFQSKRFVLRETNMESRYKTEFLEIEKIGAGEFGSVFKCVKRLDGCFYVIKRSKKPLAGSTDEQLALREVYAHAVLGHHPHVVRYYSAWAEDDHMIIQNEYCNGGSLQDLIMENNKKGQFVPEQELKEILLQVSMGLKYIHGSGLVHMDIKPSNIFICRKQTEVGEDESDGEDDVSSASVLYKIGDLGHVTSILNPQVEEGDSRFLANEILQEDYRQLPKADIFALGLTIALAAGAAPLPCNEDGWHHIRKGNLPHIPQPLTPAFLALLKLLVHPDPATRPPAASLAKNSVLRRCVGKAAELQKQLNVEKFKTAMLERELQAAKLAQDECLDLPPVSGFSCRGRKRLVGAKNARSLSFTCGGY.

Disordered stretches follow at residues Met-1–Cys-86 and Thr-145–Lys-183. Composition is skewed to polar residues over residues Ser-38–Cys-48 and Val-147–Gln-163. One can recognise a Protein kinase domain in the interval Phe-213 to Val-487. ATP-binding positions include Ile-219–Val-227 and Lys-242. Catalysis depends on Asp-340, which acts as the Proton acceptor. Mg(2+) contacts are provided by Asn-345 and Asp-377. The stretch at Ala-490–Leu-516 forms a coiled coil.

Belongs to the protein kinase superfamily. Ser/Thr protein kinase family. WEE1 subfamily.

It is found in the nucleus. It carries out the reaction L-tyrosyl-[protein] + ATP = O-phospho-L-tyrosyl-[protein] + ADP + H(+). Functionally, protein tyrosine kinase that phosphorylates and inhibits cdk1 and acts as a regulator of meiosis in oocytes. Required to ensure the meiotic cell cycle in oocytes by phosphorylating cdk1 at 'Tyr-15', leading to inhibit cdk1 activity and prevent meiosis. In Xenopus laevis (African clawed frog), this protein is Wee1-like protein kinase 2-C (wee2-c).